A 296-amino-acid polypeptide reads, in one-letter code: Protease HtpX homolog (296 aa).

The next 2 helical transmembrane spans lie at 14-34 and 38-58; these read VFLLIGFLALVGIVGAAVGYL and SLVTGIIGALLVGVIYAVIMI. Histidine 144 is a Zn(2+) binding site. Glutamate 145 is a catalytic residue. Histidine 148 serves as a coordination point for Zn(2+). Helical transmembrane passes span 159 to 179 and 198 to 218; these read IALALTAAISFLINLGSNWWL and LLVFILSLVVMIFAPLVAAVI. Residue glutamate 227 participates in Zn(2+) binding.

Belongs to the peptidase M48B family. Requires Zn(2+) as cofactor.

The protein localises to the cell membrane. In Leuconostoc citreum (strain KM20), this protein is Protease HtpX homolog.